The following is a 239-amino-acid chain: Ribonuclease PH (239 aa).

Residues Arg86 and 124–126 (GTR) each bind phosphate.

This sequence belongs to the RNase PH family. As to quaternary structure, homohexameric ring arranged as a trimer of dimers.

The catalysed reaction is tRNA(n+1) + phosphate = tRNA(n) + a ribonucleoside 5'-diphosphate. Phosphorolytic 3'-5' exoribonuclease that plays an important role in tRNA 3'-end maturation. Removes nucleotide residues following the 3'-CCA terminus of tRNAs; can also add nucleotides to the ends of RNA molecules by using nucleoside diphosphates as substrates, but this may not be physiologically important. Probably plays a role in initiation of 16S rRNA degradation (leading to ribosome degradation) during starvation. This Aromatoleum aromaticum (strain DSM 19018 / LMG 30748 / EbN1) (Azoarcus sp. (strain EbN1)) protein is Ribonuclease PH.